Here is a 329-residue protein sequence, read N- to C-terminus: Flotillin-like protein FloA (329 aa).

Transmembrane regions (helical) follow at residues 6–26 and 27–47; these read FIVI…FVPI and GLWI…LVGM.

Belongs to the flotillin-like FloA family. As to quaternary structure, homooligomerizes.

It localises to the cell membrane. Its subcellular location is the membrane raft. Functionally, found in functional membrane microdomains (FMM) that may be equivalent to eukaryotic membrane rafts. FMMs are highly dynamic and increase in number as cells age. Flotillins are thought to be important factors in membrane fluidity. The protein is Flotillin-like protein FloA of Staphylococcus aureus (strain USA300).